A 2167-amino-acid polypeptide reads, in one-letter code: Glutamate synthase 1 [NADH], chloroplastic (2167 aa).

Residues 1 to 31 are disordered; sequence MSAAQGMAYKLRTDAAPTGAGRRARRSHSSV. The N-terminal 36 residues, 1 to 36, are a transit peptide targeting the chloroplast; the sequence is MSAAQGMAYKLRTDAAPTGAGRRARRSHSSVAAPYR. The active-site Nucleophile is the Cys-100. One can recognise a Glutamine amidotransferase type-2 domain in the interval 100–504; that stretch reads CGVGFVAELS…PGMMLLVDFE (405 aa). Residues 1022-1042 are disordered; the sequence is KSNTGEGGEQPSRMEPLANGS. 1192-1249 is a binding site for FMN; that stretch reads LAETHQTLVANGLRGRAILQTDGQLKTGKDVAVACLLGAEEFGFSTAPLITLGCIMMR. Residues Cys-1245, Cys-1251, and Cys-1256 each coordinate [3Fe-4S] cluster. 1956-1970 is an NAD(+) binding site; it reads GGGDTGTDCIGTSIR.

It belongs to the glutamate synthase family. As to quaternary structure, monomer. The cofactor is [3Fe-4S] cluster. FAD is required as a cofactor. FMN serves as cofactor. Highly expressed in roots.

The protein resides in the plastid. It localises to the chloroplast. The enzyme catalyses 2 L-glutamate + NAD(+) = L-glutamine + 2-oxoglutarate + NADH + H(+). It functions in the pathway amino-acid biosynthesis; L-glutamate biosynthesis via GLT pathway; L-glutamate from 2-oxoglutarate and L-glutamine (NAD(+) route): step 1/1. The protein operates within energy metabolism; nitrogen metabolism. Functionally, involved in glutamate biosynthesis and plays a major role in the primary ammonium ions assimilation in seedling roots. May be involved in the reutilization of glutamine in developing organs. Plays a role in the development of tillers. This is Glutamate synthase 1 [NADH], chloroplastic from Oryza sativa subsp. japonica (Rice).